Reading from the N-terminus, the 309-residue chain is Formimidoylglutamase (309 aa).

Mn(2+) is bound by residues His128, Asp153, His155, Asp157, Cys240, and Asp242.

The protein belongs to the arginase family. The cofactor is Mn(2+).

It carries out the reaction N-formimidoyl-L-glutamate + H2O = formamide + L-glutamate. It functions in the pathway amino-acid degradation; L-histidine degradation into L-glutamate; L-glutamate from N-formimidoyl-L-glutamate (hydrolase route): step 1/1. Its function is as follows. Catalyzes the conversion of N-formimidoyl-L-glutamate to L-glutamate and formamide. This is Formimidoylglutamase from Staphylococcus carnosus (strain TM300).